Consider the following 249-residue polypeptide: Putative nicotinamide mononucleotide adenylyltransferase (249 aa).

2 residues coordinate NAD(+): Ser40 and Phe41. His48 is a binding site for ATP. NAD(+) is bound by residues Thr97, Gly129, Asp131, Arg165, and Asn206. An ATP-binding site is contributed by 214–217 (TRAR).

The protein belongs to the eukaryotic NMN adenylyltransferase family. POF1 subfamily.

The protein localises to the cytoplasm. Its subcellular location is the nucleus. It carries out the reaction beta-nicotinamide D-ribonucleotide + ATP + H(+) = diphosphate + NAD(+). Its pathway is cofactor biosynthesis; NAD(+) biosynthesis; NAD(+) from nicotinamide D-ribonucleotide: step 1/1. Functionally, catalyzes the formation of NAD(+) from nicotinamide mononucleotide (NMN) and ATP. Involved in the salvage pathway for NAD(+) biosynthesis via NMN. The protein is Putative nicotinamide mononucleotide adenylyltransferase of Schizosaccharomyces pombe (strain 972 / ATCC 24843) (Fission yeast).